The following is a 325-amino-acid chain: Glutarate 2-hydroxylase (325 aa).

Fe cation contacts are provided by H160, D162, and H292.

The protein belongs to the glutarate hydroxylase family. In terms of assembly, homotetramer. Fe(2+) serves as cofactor.

It catalyses the reaction glutarate + 2-oxoglutarate + O2 = (S)-2-hydroxyglutarate + succinate + CO2. It functions in the pathway amino-acid degradation. Acts as an alpha-ketoglutarate-dependent dioxygenase catalyzing hydroxylation of glutarate (GA) to L-2-hydroxyglutarate (L2HG). Functions in a L-lysine degradation pathway that proceeds via cadaverine, glutarate and L-2-hydroxyglutarate. The sequence is that of Glutarate 2-hydroxylase from Salmonella typhimurium (strain SL1344).